The primary structure comprises 721 residues: uncharacterized protein (721 aa).

Disordered stretches follow at residues T196 to P291 and A370 to Q513. Low complexity-rich tracts occupy residues S202 to P224 and S232 to P250. Composition is skewed to pro residues over residues P264–A283 and A379–P389. Low complexity predominate over residues A419–A429. Positions V435–T446 are enriched in pro residues. Positions V470–S484 are enriched in polar residues. The segment covering A491–D505 has biased composition (low complexity).

This is an uncharacterized protein from Mycobacterium tuberculosis (strain ATCC 25618 / H37Rv).